Consider the following 844-residue polypeptide: Rho guanine nucleotide exchange factor 33 (844 aa).

2 stretches are compositionally biased toward basic and acidic residues: residues methionine 1–histidine 13 and glutamine 101–arginine 113. Disordered regions lie at residues methionine 1–serine 20, glutamine 101–phenylalanine 142, and alanine 169–glycine 189. Residues leucine 54 to serine 129 adopt a coiled-coil conformation. Residues serine 130–phenylalanine 142 show a composition bias toward polar residues. The region spanning lysine 265–leucine 440 is the DH domain. Disordered stretches follow at residues leucine 498 to leucine 541, arginine 668 to serine 687, and alanine 702 to glutamine 745. An Omega-N-methylarginine modification is found at arginine 757. Residues aspartate 787–glutamate 800 are compositionally biased toward basic and acidic residues. The disordered stretch occupies residues aspartate 787–tryptophan 844. The segment covering serine 820 to asparagine 829 has biased composition (basic residues).

May act as a guanine-nucleotide releasing factor. This Homo sapiens (Human) protein is Rho guanine nucleotide exchange factor 33 (ARHGEF33).